An 846-amino-acid chain; its full sequence is Cap-specific mRNA (nucleoside-2'-O-)-methyltransferase 1 (846 aa).

Residues 1-81 (MKRKSDSEQQ…LPDTLAEGSS (81 aa)) are disordered. Positions 2-20 (KRKSDSEQQPSVQCRKKKR) match the Bipartite nuclear localization signal motif. Polar residues predominate over residues 27–45 (NLSSTSDDDTQYSNHGTQE). The 47-residue stretch at 87 to 133 (YNSVSQKLMAKMGFREGEGLGKFGQGRKEIVETSKQKGRRGLGMVLK) folds into the G-patch domain. Residues 203 to 207 (KSAFD) and arginine 218 contribute to the substrate site. The region spanning 231–450 (FFLNRAAMKM…ERYVVCRGLK (220 aa)) is the RrmJ-type SAM-dependent 2'-O-MTase domain. Residue asparagine 234 coordinates S-adenosyl-L-methionine. Lysine 239 is an active-site residue. Residues 277 to 283 (CAGPGGF) and 335 to 336 (DV) each bind S-adenosyl-L-methionine. Aspartate 364 is an active-site residue. 374–376 (NIQ) contacts substrate. Residue lysine 404 is the Proton acceptor of the active site. Asparagine 439 serves as a coordination point for substrate. Residues 752–786 (KTINEPWSMAYSKSQKRKYFYNSKTKNSQFELPVE) enclose the WW domain.

It is found in the nucleus. The catalysed reaction is a 5'-end (N(7)-methyl 5'-triphosphoguanosine)-ribonucleoside in mRNA + S-adenosyl-L-methionine = a 5'-end (N(7)-methyl 5'-triphosphoguanosine)-(2'-O-methyl-ribonucleoside) in mRNA + S-adenosyl-L-homocysteine + H(+). Its function is as follows. S-adenosyl-L-methionine-dependent methyltransferase that mediates mRNA cap1 2'-O-ribose methylation to the 5'-cap structure of mRNAs. Methylates the ribose of the first nucleotide of a m(7)GpppG-capped mRNA and small nuclear RNA (snRNA) to produce m(7)GpppRm (cap1). Displays a preference for cap0 transcripts. Cap1 modification is linked to higher levels of translation. May be involved in the interferon response pathway. In Xenopus laevis (African clawed frog), this protein is Cap-specific mRNA (nucleoside-2'-O-)-methyltransferase 1 (cmtr1).